Reading from the N-terminus, the 606-residue chain is Glutamine--fructose-6-phosphate aminotransferase [isomerizing] (606 aa).

The Nucleophile; for GATase activity role is filled by Cys2. The Glutamine amidotransferase type-2 domain maps to 2–217; sequence CGIVGMVGEN…DGDVMVLRKD (216 aa). 2 SIS domains span residues 284 to 423 and 455 to 596; these read YEEL…INGY and LSEK…PDKP. Catalysis depends on Lys601, which acts as the For Fru-6P isomerization activity.

In terms of assembly, homodimer.

The protein localises to the cytoplasm. The catalysed reaction is D-fructose 6-phosphate + L-glutamine = D-glucosamine 6-phosphate + L-glutamate. Its function is as follows. Catalyzes the first step in hexosamine metabolism, converting fructose-6P into glucosamine-6P using glutamine as a nitrogen source. The sequence is that of Glutamine--fructose-6-phosphate aminotransferase [isomerizing] from Thermotoga maritima (strain ATCC 43589 / DSM 3109 / JCM 10099 / NBRC 100826 / MSB8).